The chain runs to 422 residues: Zinc finger protein Gfi-1 (422 aa).

The segment at 1-20 (MPRSFLVKSKKAHSYHQPRS) is SNAG domain. The interval 1 to 107 (MPRSFLVKSK…SPASEKSVCP (107 aa)) is disordered. At Ser-20 the chain carries Phosphoserine. Low complexity predominate over residues 34 to 47 (APGGADGTSSAGGA). The residue at position 56 (Ser-56) is a Phosphoserine. Positions 57 to 72 (PESQLTEAPDRSSASP) are enriched in polar residues. The segment at 140-257 (RPCAALDRGA…LLLGGGSYKC (118 aa)) is required for interaction with RELA. 6 consecutive C2H2-type zinc fingers follow at residues 255–278 (YKCI…RRSH), 284–306 (FACE…KAVH), 312–334 (FDCK…LLIH), 340–362 (YPCQ…TFIH), 368–390 (HKCQ…SRKH), and 396–419 (FGCD…ETQH).

As to quaternary structure, interacts with U2AF1L4. Component of RCOR-GFI-KDM1A-HDAC complexes. Interacts directly with RCOR1, KDM1A and HDAC2. Also interacts with HDAC1 and HDAC3. Interacts (via the zinc-finger domain) with ARIH2; the interaction prevents GFI1 ubiquitination and proteasomal degradation. Interacts with PIAS3; the interaction relieves the inhibitory effect of PIAS3 on STAT3-mediated transcriptional activity. Forms a complex with EHMT2 and HDAC1 to promote 'Lys-9' dimethylation of H3 (H3K9Me2) and repress expression of target genes. Interacts directly with EHMT2. Component of the GFI1-AJUBA-HDAC1 repressor complex. Interacts directly with AJUBA (via ITS LIM domains); the interaction results in the HDAC-dependent corepression of a subset of GFI1 target genes and, occurs independently of the SNAG domain. Interacts with SPI1; the interaction inhibits SPI1 transcriptional activity targeted at macrophage-specific genes, repressing macrophage differentiation of myeloid progenitor cells and promoting granulocyte commitment. Interacts with RUNX1T1; the interaction represses HDAC-mediated transcriptional activity. Interacts with RELA; the interaction occurs on liposaccharide (LPS) stimulation and controls RELA DNA binding activity and regulates endotoxin-mediated TOLL-like receptor inflammatory response. Interacts (via the C-terminal zinc fingers) with ZBTB17; the interaction results in the recruitment of GFI1 to the CDKN1A/p21 and CDKNIB promoters and repression of transcription. Ubiquitinated.

It is found in the nucleus. In terms of biological role, transcription repressor essential for hematopoiesis. Functions in a cell-context and development-specific manner. Binds to 5'-TAAATCAC[AT]GCA-3' in the promoter region of a large number of genes. Component of several complexes, including the EHMT2-GFI1-HDAC1, AJUBA-GFI1-HDAC1 and RCOR-GFI-KDM1A-HDAC complexes, that suppress, via histone deacetylase (HDAC) recruitment, a number of genes implicated in multilineage blood cell development. Regulates neutrophil differentiation, promotes proliferation of lymphoid cells, and is required for granulocyte development. Inhibits SPI1 transcriptional activity at macrophage-specific genes, repressing macrophage differentiation of myeloid progenitor cells and promoting granulocyte commitment. Mediates, together with U2AF1L4, the alternative splicing of CD45 and controls T-cell receptor signaling. Regulates the endotoxin-mediated Toll-like receptor (TLR) inflammatory response by antagonizing RELA. Cooperates with CBFA2T2 to regulate ITGB1-dependent neurite growth. Controls cell-cycle progression by repressing CDKNIA/p21 transcription in response to TGFB1 via recruitment of GFI1 by ZBTB17 to the CDKNIA/p21 and CDKNIB promoters. Required for the maintenance of inner ear hair cells. In addition to its role in transcription, acts as a substrate adapter for PRMT1 in the DNA damage response: facilitates the recognition of TP53BP1 and MRE11 substrates by PRMT1, promoting their methylation and the DNA damage response. This Canis lupus familiaris (Dog) protein is Zinc finger protein Gfi-1 (GFI1).